The primary structure comprises 221 residues: Large ribosomal subunit protein uL1 (221 aa).

This sequence belongs to the universal ribosomal protein uL1 family. As to quaternary structure, part of the 50S ribosomal subunit.

Functionally, probably involved in E site tRNA release. Binds directly to 23S rRNA. In terms of biological role, protein L1 is also a translational repressor protein, it controls the translation of its operon by binding to its mRNA. The sequence is that of Large ribosomal subunit protein uL1 from Sulfolobus acidocaldarius (strain ATCC 33909 / DSM 639 / JCM 8929 / NBRC 15157 / NCIMB 11770).